The primary structure comprises 196 residues: Large ribosomal subunit protein uL10 (196 aa).

A disordered region spans residues 167 to 196 (EKKAAEGPAEAPQPATEPPAEAPEAPADAE).

It belongs to the universal ribosomal protein uL10 family. Part of the ribosomal stalk of the 50S ribosomal subunit. The N-terminus interacts with L11 and the large rRNA to form the base of the stalk. The C-terminus forms an elongated spine to which L12 dimers bind in a sequential fashion forming a multimeric L10(L12)X complex.

Forms part of the ribosomal stalk, playing a central role in the interaction of the ribosome with GTP-bound translation factors. In Mycolicibacterium paratuberculosis (strain ATCC BAA-968 / K-10) (Mycobacterium paratuberculosis), this protein is Large ribosomal subunit protein uL10.